The following is a 229-amino-acid chain: Protein-lysine N-methyltransferase EFM4 (229 aa).

The protein belongs to the class I-like SAM-binding methyltransferase superfamily. EFM4 family.

The protein resides in the cytoplasm. The enzyme catalyses L-lysyl-[protein] + S-adenosyl-L-methionine = N(6)-methyl-L-lysyl-[protein] + S-adenosyl-L-homocysteine + H(+). The catalysed reaction is N(6)-methyl-L-lysyl-[protein] + S-adenosyl-L-methionine = N(6),N(6)-dimethyl-L-lysyl-[protein] + S-adenosyl-L-homocysteine + H(+). Its function is as follows. S-adenosyl-L-methionine-dependent protein-lysine N-methyltransferase that mono- and dimethylates elongation factor 1-alpha (TEF1 and TEF2) at 'Lys-316'. May play a role in intracellular transport. In Saccharomyces cerevisiae (strain ATCC 204508 / S288c) (Baker's yeast), this protein is Protein-lysine N-methyltransferase EFM4.